A 563-amino-acid chain; its full sequence is (R)-mandelonitrile lyase 1 (563 aa).

The N-terminal stretch at 1 to 27 is a signal peptide; that stretch reads MEKSTMSAILLVLHLFVLLLQYSEVHS. FAD-binding positions include 63–64, 82–83, valine 129, threonine 133, and 137–140; these read TS, ER, and NAGV. 2 N-linked (GlcNAc...) asparagine glycosylation sites follow: asparagine 145 and asparagine 162. Valine 244 is a binding site for FAD. Position 355 (cysteine 355) interacts with substrate. Asparagine 379 is a glycosylation site (N-linked (GlcNAc...) asparagine). Residues cysteine 426 and cysteine 477 are joined by a disulfide bond. Position 484 (tyrosine 484) interacts with substrate. Residues 485-486 and glycine 514 each bind FAD; that span reads WH. The active-site Proton donor is histidine 486. Histidine 524 (proton acceptor) is an active-site residue. 525–526 is an FAD binding site; the sequence is PQ.

It belongs to the GMC oxidoreductase family. Monomer. Requires FAD as cofactor. Glycosylated. In terms of tissue distribution, seeds. Localized within cotyledonary parenchyma cells.

The protein resides in the vacuole. It is found in the aleurone grain. It catalyses the reaction (R)-mandelonitrile = benzaldehyde + hydrogen cyanide. Functionally, involved in cyanogenesis, the release of HCN from injured tissues. Catalyzes the stereospecific addition of HCN to a variety of aldehydes in vitro. It is a major seed constituent, and could have the additional role of a storage form for reduced nitrogen. The polypeptide is (R)-mandelonitrile lyase 1 (MDL1) (Prunus serotina (Black cherry)).